The primary structure comprises 635 residues: 1-deoxy-D-xylulose-5-phosphate synthase (635 aa).

Thiamine diphosphate-binding positions include histidine 78 and 119–121 (GHS). Position 151 (aspartate 151) interacts with Mg(2+). Thiamine diphosphate contacts are provided by residues 152–153 (GA), asparagine 180, tyrosine 289, and glutamate 371. Asparagine 180 contributes to the Mg(2+) binding site.

It belongs to the transketolase family. DXPS subfamily. In terms of assembly, homodimer. Mg(2+) is required as a cofactor. The cofactor is thiamine diphosphate.

The catalysed reaction is D-glyceraldehyde 3-phosphate + pyruvate + H(+) = 1-deoxy-D-xylulose 5-phosphate + CO2. Its pathway is metabolic intermediate biosynthesis; 1-deoxy-D-xylulose 5-phosphate biosynthesis; 1-deoxy-D-xylulose 5-phosphate from D-glyceraldehyde 3-phosphate and pyruvate: step 1/1. Functionally, catalyzes the acyloin condensation reaction between C atoms 2 and 3 of pyruvate and glyceraldehyde 3-phosphate to yield 1-deoxy-D-xylulose-5-phosphate (DXP). The polypeptide is 1-deoxy-D-xylulose-5-phosphate synthase (Bartonella tribocorum (strain CIP 105476 / IBS 506)).